Reading from the N-terminus, the 583-residue chain is Ferredoxin--nitrite reductase, chloroplastic (583 aa).

Residues 1–22 (MSSLSVRFLSPPLFSSTPAWPR) constitute a chloroplast transit peptide. [4Fe-4S] cluster-binding residues include C461, C467, C502, and C506. C506 contacts siroheme.

This sequence belongs to the nitrite and sulfite reductase 4Fe-4S domain family. In terms of assembly, monomer. Siroheme serves as cofactor. Requires [4Fe-4S] cluster as cofactor.

It is found in the plastid. Its subcellular location is the chloroplast. The catalysed reaction is 6 oxidized [2Fe-2S]-[ferredoxin] + NH4(+) + 2 H2O = nitrite + 6 reduced [2Fe-2S]-[ferredoxin] + 8 H(+). It functions in the pathway nitrogen metabolism; nitrate reduction (assimilation). The chain is Ferredoxin--nitrite reductase, chloroplastic (NIR1) from Betula pendula (European white birch).